A 199-amino-acid chain; its full sequence is A-type ATP synthase subunit E (199 aa).

The protein belongs to the V-ATPase E subunit family. As to quaternary structure, has multiple subunits with at least A(3), B(3), C, D, E, F, H, I and proteolipid K(x).

Its subcellular location is the cell membrane. Component of the A-type ATP synthase that produces ATP from ADP in the presence of a proton gradient across the membrane. This is A-type ATP synthase subunit E from Pyrococcus abyssi (strain GE5 / Orsay).